The chain runs to 161 residues: 6,7-dimethyl-8-ribityllumazine synthase (161 aa).

5-amino-6-(D-ribitylamino)uracil contacts are provided by residues Trp-31, 63-65 (SFE), and 85-87 (VVI). 90-91 (GT) lines the (2S)-2-hydroxy-3-oxobutyl phosphate pocket. The active-site Proton donor is the His-93. Position 118 (Phe-118) interacts with 5-amino-6-(D-ribitylamino)uracil. Residue Arg-132 participates in (2S)-2-hydroxy-3-oxobutyl phosphate binding.

The protein belongs to the DMRL synthase family.

It catalyses the reaction (2S)-2-hydroxy-3-oxobutyl phosphate + 5-amino-6-(D-ribitylamino)uracil = 6,7-dimethyl-8-(1-D-ribityl)lumazine + phosphate + 2 H2O + H(+). It functions in the pathway cofactor biosynthesis; riboflavin biosynthesis; riboflavin from 2-hydroxy-3-oxobutyl phosphate and 5-amino-6-(D-ribitylamino)uracil: step 1/2. Its function is as follows. Catalyzes the formation of 6,7-dimethyl-8-ribityllumazine by condensation of 5-amino-6-(D-ribitylamino)uracil with 3,4-dihydroxy-2-butanone 4-phosphate. This is the penultimate step in the biosynthesis of riboflavin. In Arthrobacter sp. (strain FB24), this protein is 6,7-dimethyl-8-ribityllumazine synthase.